The sequence spans 128 residues: Large ribosomal subunit protein bL12 (128 aa).

The protein belongs to the bacterial ribosomal protein bL12 family. Homodimer. Part of the ribosomal stalk of the 50S ribosomal subunit. Forms a multimeric L10(L12)X complex, where L10 forms an elongated spine to which 2 to 4 L12 dimers bind in a sequential fashion. Binds GTP-bound translation factors.

Forms part of the ribosomal stalk which helps the ribosome interact with GTP-bound translation factors. Is thus essential for accurate translation. This is Large ribosomal subunit protein bL12 from Methylobacillus flagellatus (strain ATCC 51484 / DSM 6875 / VKM B-1610 / KT).